A 396-amino-acid chain; its full sequence is 1-deoxy-D-xylulose 5-phosphate reductoisomerase (396 aa).

Residues Thr10, Gly11, Ser12, Ile13, Gly36, Lys37, Asn38, and Asn124 each coordinate NADPH. Residue Lys125 participates in 1-deoxy-D-xylulose 5-phosphate binding. An NADPH-binding site is contributed by Glu126. Asp150 contributes to the Mn(2+) binding site. The 1-deoxy-D-xylulose 5-phosphate site is built by Ser151, Glu152, Ser186, and His209. A Mn(2+)-binding site is contributed by Glu152. NADPH is bound at residue Gly215. Residues Ser222, Asn227, Lys228, and Glu231 each coordinate 1-deoxy-D-xylulose 5-phosphate. Glu231 lines the Mn(2+) pocket.

It belongs to the DXR family. Mg(2+) serves as cofactor. The cofactor is Mn(2+).

It carries out the reaction 2-C-methyl-D-erythritol 4-phosphate + NADP(+) = 1-deoxy-D-xylulose 5-phosphate + NADPH + H(+). It participates in isoprenoid biosynthesis; isopentenyl diphosphate biosynthesis via DXP pathway; isopentenyl diphosphate from 1-deoxy-D-xylulose 5-phosphate: step 1/6. In terms of biological role, catalyzes the NADPH-dependent rearrangement and reduction of 1-deoxy-D-xylulose-5-phosphate (DXP) to 2-C-methyl-D-erythritol 4-phosphate (MEP). The protein is 1-deoxy-D-xylulose 5-phosphate reductoisomerase of Glaesserella parasuis serovar 5 (strain SH0165) (Haemophilus parasuis).